Consider the following 551-residue polypeptide: Probable NADH-ubiquinone oxidoreductase C3A11.07, mitochondrial (551 aa).

The N-terminal 37 residues, 1-37, are a transit peptide targeting the mitochondrion; the sequence is MLFSRSILRGMPKAGIPKSPLALSASRNLRLANSVRF. An FAD-binding site is contributed by 93–123; it reads TLVVLGAGWGATSILRTIDTSLFNVIVVSPR. 255-291 contacts NAD(+); the sequence is VHTVVVGGGPTGMEFAGEMADFIEDDLKSWYPELADD.

It belongs to the NADH dehydrogenase family.

Its subcellular location is the mitochondrion. The enzyme catalyses a quinone + NADH + H(+) = a quinol + NAD(+). The catalysed reaction is a ubiquinone + NADH + H(+) = a ubiquinol + NAD(+). Its function is as follows. Catalyzes the oxidation of NADH. The chain is Probable NADH-ubiquinone oxidoreductase C3A11.07, mitochondrial from Schizosaccharomyces pombe (strain 972 / ATCC 24843) (Fission yeast).